The chain runs to 309 residues: tRNA pseudouridine synthase B (309 aa).

The active-site Nucleophile is aspartate 52.

This sequence belongs to the pseudouridine synthase TruB family. Type 1 subfamily.

The catalysed reaction is uridine(55) in tRNA = pseudouridine(55) in tRNA. Functionally, responsible for synthesis of pseudouridine from uracil-55 in the psi GC loop of transfer RNAs. The protein is tRNA pseudouridine synthase B of Leptospira interrogans serogroup Icterohaemorrhagiae serovar copenhageni (strain Fiocruz L1-130).